Reading from the N-terminus, the 457-residue chain is ATP synthase subunit beta (457 aa).

Gly150–Thr157 contributes to the ATP binding site.

This sequence belongs to the ATPase alpha/beta chains family. In terms of assembly, F-type ATPases have 2 components, CF(1) - the catalytic core - and CF(0) - the membrane proton channel. CF(1) has five subunits: alpha(3), beta(3), gamma(1), delta(1), epsilon(1). CF(0) has three main subunits: a(1), b(2) and c(9-12). The alpha and beta chains form an alternating ring which encloses part of the gamma chain. CF(1) is attached to CF(0) by a central stalk formed by the gamma and epsilon chains, while a peripheral stalk is formed by the delta and b chains.

The protein resides in the cell membrane. It catalyses the reaction ATP + H2O + 4 H(+)(in) = ADP + phosphate + 5 H(+)(out). In terms of biological role, produces ATP from ADP in the presence of a proton gradient across the membrane. The catalytic sites are hosted primarily by the beta subunits. The sequence is that of ATP synthase subunit beta from Baumannia cicadellinicola subsp. Homalodisca coagulata.